Reading from the N-terminus, the 352-residue chain is Anthranilate phosphoribosyltransferase (352 aa).

5-phospho-alpha-D-ribose 1-diphosphate contacts are provided by residues Gly-94, 97–98, Ser-102, 104–107, 122–130, and Ser-134; these read GS, NIST, and KHGNRAVSS. Gly-94 is an anthranilate binding site. Ser-106 is a Mg(2+) binding site. Asn-125 lines the anthranilate pocket. Arg-180 lines the anthranilate pocket. The Mg(2+) site is built by Asp-239 and Glu-240.

It belongs to the anthranilate phosphoribosyltransferase family. As to quaternary structure, homodimer. The cofactor is Mg(2+).

It catalyses the reaction N-(5-phospho-beta-D-ribosyl)anthranilate + diphosphate = 5-phospho-alpha-D-ribose 1-diphosphate + anthranilate. Its pathway is amino-acid biosynthesis; L-tryptophan biosynthesis; L-tryptophan from chorismate: step 2/5. Catalyzes the transfer of the phosphoribosyl group of 5-phosphorylribose-1-pyrophosphate (PRPP) to anthranilate to yield N-(5'-phosphoribosyl)-anthranilate (PRA). The polypeptide is Anthranilate phosphoribosyltransferase (Geobacter sp. (strain M21)).